A 61-amino-acid polypeptide reads, in one-letter code: Small ribosomal subunit protein uS14B (61 aa).

Positions 24, 27, 40, and 43 each coordinate Zn(2+).

It belongs to the universal ribosomal protein uS14 family. Zinc-binding uS14 subfamily. Part of the 30S ribosomal subunit. Contacts proteins S3 and S10. Requires Zn(2+) as cofactor.

Functionally, binds 16S rRNA, required for the assembly of 30S particles and may also be responsible for determining the conformation of the 16S rRNA at the A site. The polypeptide is Small ribosomal subunit protein uS14B (Pediococcus pentosaceus (strain ATCC 25745 / CCUG 21536 / LMG 10740 / 183-1w)).